Here is a 253-residue protein sequence, read N- to C-terminus: Troponin T, fast skeletal muscle isoforms (253 aa).

Residues 1 to 25 (MSDTEEVEHGEEEYEEEEEVQEEEV) show a composition bias toward acidic residues. Disordered stretches follow at residues 1-58 (MSDT…DIQK) and 97-178 (RAER…VLAE). At S2 the chain carries N-acetylserine. 3 stretches are compositionally biased toward basic and acidic residues: residues 46–58 (PEGE…DIQK), 97–139 (RAER…DDLK), and 167–178 (TARETKKKVLAE).

It belongs to the troponin T family.

Its function is as follows. Troponin T is the tropomyosin-binding subunit of troponin, the thin filament regulatory complex which confers calcium-sensitivity to striated muscle actomyosin ATPase activity. This Coturnix japonica (Japanese quail) protein is Troponin T, fast skeletal muscle isoforms (TNNT3).